The primary structure comprises 137 residues: Protein Turandot X (137 aa).

The signal sequence occupies residues 1 to 24; sequence MKVPVFQLSCLLCLIVCLLCSVKA.

The protein belongs to the Turandot family.

The protein localises to the secreted. A humoral factor that may play a role in stress tolerance. The polypeptide is Protein Turandot X (Drosophila persimilis (Fruit fly)).